Consider the following 783-residue polypeptide: Ubiquitin carboxyl-terminal hydrolase 1 (783 aa).

Disordered regions lie at residues 1–22 and 34–55; these read MPGV…KKNR and KRAL…YKGS. Residues 7–16 are compositionally biased toward polar residues; that stretch reads SESNGLSRGS. Phosphoserine occurs at positions 16 and 42. Over residues 45-55 the composition is skewed to basic and acidic residues; the sequence is NEEKTSEYKGS. Serine 67 is modified (phosphoserine). Positions 81–783 constitute a USP domain; it reads VGLNNLGNTC…TPYLLFYKKL (703 aa). Cysteine 90 (nucleophile) is an active-site residue. Residues 234–311 form a disordered region; the sequence is EEYQKEEMSD…RKAAGDTLEI (78 aa). Basic and acidic residues-rich tracts occupy residues 250–273 and 284–296; these read DNMR…KSDA and ISKE…ENQR. Phosphoserine is present on serine 473. The Proton acceptor role is filled by histidine 591. The interval 685 to 722 is disordered; it reads PDKVASTALPENRNSETNNTNGTDESDSNKESSDQTGI. Serine 766 is modified (phosphoserine).

This sequence belongs to the peptidase C19 family. Interacts with FANCD2 and PCNA. Interacts with WDR48. Interacts with ATAD5; the interaction regulates USP1-mediated PCNA deubiquitination. Post-translationally, autocatalytic cleavage of USP1 following UV irradiation inactivates it, leading to an increase in ubiquitinated PCNA, recruitment of POLH and translesion synthesis. In terms of processing, ubiquitinated by the CRL2(KLHDC2) complex following autocatalytic cleavage, leading to its degradation: the CRL2(KLHDC2) complex recognizes the diglycine (Gly-Gly) at the C-terminus.

The protein localises to the nucleus. It carries out the reaction Thiol-dependent hydrolysis of ester, thioester, amide, peptide and isopeptide bonds formed by the C-terminal Gly of ubiquitin (a 76-residue protein attached to proteins as an intracellular targeting signal).. Its function is as follows. Negative regulator of DNA damage repair which specifically deubiquitinates monoubiquitinated FANCD2. Also involved in PCNA-mediated translesion synthesis (TLS) by deubiquitinating monoubiquitinated PCNA. Has almost no deubiquitinating activity by itself and requires the interaction with WDR48 to have a high activity. The sequence is that of Ubiquitin carboxyl-terminal hydrolase 1 from Bos taurus (Bovine).